Here is a 408-residue protein sequence, read N- to C-terminus: Peptidase T (408 aa).

Histidine 78 is a Zn(2+) binding site. Residue aspartate 80 is part of the active site. Residue aspartate 140 coordinates Zn(2+). Glutamate 173 functions as the Proton acceptor in the catalytic mechanism. Positions 174, 196, and 379 each coordinate Zn(2+).

The protein belongs to the peptidase M20B family. Requires Zn(2+) as cofactor.

The protein resides in the cytoplasm. It carries out the reaction Release of the N-terminal residue from a tripeptide.. Functionally, cleaves the N-terminal amino acid of tripeptides. This Escherichia coli (strain UTI89 / UPEC) protein is Peptidase T.